The chain runs to 711 residues: Ribosomal RNA large subunit methyltransferase K/L (711 aa).

The 112-residue stretch at 42-153 (DAQRAVLWSR…KGRATISVDL (112 aa)) folds into the THUMP domain.

This sequence belongs to the methyltransferase superfamily. RlmKL family.

It is found in the cytoplasm. It catalyses the reaction guanosine(2445) in 23S rRNA + S-adenosyl-L-methionine = N(2)-methylguanosine(2445) in 23S rRNA + S-adenosyl-L-homocysteine + H(+). The catalysed reaction is guanosine(2069) in 23S rRNA + S-adenosyl-L-methionine = N(2)-methylguanosine(2069) in 23S rRNA + S-adenosyl-L-homocysteine + H(+). Its function is as follows. Specifically methylates the guanine in position 2445 (m2G2445) and the guanine in position 2069 (m7G2069) of 23S rRNA. The polypeptide is Ribosomal RNA large subunit methyltransferase K/L (Xanthomonas oryzae pv. oryzae (strain MAFF 311018)).